Here is a 179-residue protein sequence, read N- to C-terminus: Peroxiredoxin (179 aa).

The 151-residue stretch at 2–152 (TMEKQVPIVT…VEGWFEEEGF (151 aa)) folds into the Thioredoxin domain. Cysteine 56 (cysteine sulfenic acid (-SOH) intermediate (for peroxiredoxin activity)) is an active-site residue.

The protein belongs to the peroxiredoxin family. Prx5 subfamily. In terms of assembly, monomer.

The enzyme catalyses a hydroperoxide + 2 glutathione = an alcohol + glutathione disulfide + H2O. Thiol-specific peroxidase that catalyzes the reduction of hydrogen peroxide and organic hydroperoxides to water and alcohols, respectively. Plays a role in cell protection against oxidative stress by detoxifying peroxides. The polypeptide is Peroxiredoxin (Rhizobium etli).